Consider the following 396-residue polypeptide: Phosphoglycerate kinase (396 aa).

Residues 21 to 23, R36, 59 to 62, R119, and R156 contribute to the substrate site; these read DFN and HLGK. Residues K206, E325, and 352–355 contribute to the ATP site; that span reads GGDS.

It belongs to the phosphoglycerate kinase family. In terms of assembly, monomer.

Its subcellular location is the cytoplasm. The enzyme catalyses (2R)-3-phosphoglycerate + ATP = (2R)-3-phospho-glyceroyl phosphate + ADP. Its pathway is carbohydrate degradation; glycolysis; pyruvate from D-glyceraldehyde 3-phosphate: step 2/5. This chain is Phosphoglycerate kinase, found in Staphylococcus haemolyticus (strain JCSC1435).